A 276-amino-acid polypeptide reads, in one-letter code: Large ribosomal subunit protein uL2 (276 aa).

Residues 219–276 are disordered; the sequence is TVRGSVMNPNDHPHGGGEGRSPIGRPSPVTPWGKPALGYKTRKKNKASNKLIVSRRTK. Residues 258 to 276 show a composition bias toward basic residues; that stretch reads KTRKKNKASNKLIVSRRTK.

This sequence belongs to the universal ribosomal protein uL2 family. Part of the 50S ribosomal subunit. Forms a bridge to the 30S subunit in the 70S ribosome.

One of the primary rRNA binding proteins. Required for association of the 30S and 50S subunits to form the 70S ribosome, for tRNA binding and peptide bond formation. It has been suggested to have peptidyltransferase activity; this is somewhat controversial. Makes several contacts with the 16S rRNA in the 70S ribosome. The chain is Large ribosomal subunit protein uL2 from Clostridioides difficile (strain 630) (Peptoclostridium difficile).